Reading from the N-terminus, the 217-residue chain is 3-dehydroquinate dehydratase (217 aa).

3-dehydroquinate contacts are provided by residues 26 to 28 and arginine 59; that span reads EFR. The Proton donor/acceptor role is filled by histidine 114. The active-site Schiff-base intermediate with substrate is the lysine 140. Residues arginine 178 and glutamine 201 each coordinate 3-dehydroquinate.

Belongs to the type-I 3-dehydroquinase family. Homodimer.

The catalysed reaction is 3-dehydroquinate = 3-dehydroshikimate + H2O. Its pathway is metabolic intermediate biosynthesis; chorismate biosynthesis; chorismate from D-erythrose 4-phosphate and phosphoenolpyruvate: step 3/7. Its function is as follows. Involved in the third step of the chorismate pathway, which leads to the biosynthesis of aromatic amino acids. Catalyzes the cis-dehydration of 3-dehydroquinate (DHQ) and introduces the first double bond of the aromatic ring to yield 3-dehydroshikimate. The polypeptide is 3-dehydroquinate dehydratase (Hydrogenobaculum sp. (strain Y04AAS1)).